The primary structure comprises 263 residues: N-acyl homoserine lactonase AttM (263 aa).

H103, H105, D107, H108, H180, D202, and H247 together coordinate Zn(2+).

Belongs to the metallo-beta-lactamase superfamily. Zn(2+) serves as cofactor.

The enzyme catalyses an N-acyl-L-homoserine lactone + H2O = an N-acyl-L-homoserine + H(+). This chain is N-acyl homoserine lactonase AttM (attM), found in Rhizobium radiobacter (Agrobacterium tumefaciens).